A 310-amino-acid chain; its full sequence is tRNA pseudouridine synthase B (310 aa).

The active-site Nucleophile is D37.

Belongs to the pseudouridine synthase TruB family. Type 1 subfamily.

The catalysed reaction is uridine(55) in tRNA = pseudouridine(55) in tRNA. Functionally, responsible for synthesis of pseudouridine from uracil-55 in the psi GC loop of transfer RNAs. The polypeptide is tRNA pseudouridine synthase B (Deinococcus deserti (strain DSM 17065 / CIP 109153 / LMG 22923 / VCD115)).